We begin with the raw amino-acid sequence, 433 residues long: 3-phosphoshikimate 1-carboxyvinyltransferase (433 aa).

Residues lysine 15, serine 16, and arginine 20 each contribute to the 3-phosphoshikimate site. Lysine 15 contacts phosphoenolpyruvate. Residues glycine 96 and arginine 124 each contribute to the phosphoenolpyruvate site. 3-phosphoshikimate contacts are provided by serine 169, glutamine 171, serine 195, aspartate 318, and lysine 345. Residue glutamine 171 coordinates phosphoenolpyruvate. The active-site Proton acceptor is the aspartate 318. Positions 349 and 393 each coordinate phosphoenolpyruvate.

This sequence belongs to the EPSP synthase family. As to quaternary structure, monomer.

It localises to the cytoplasm. It catalyses the reaction 3-phosphoshikimate + phosphoenolpyruvate = 5-O-(1-carboxyvinyl)-3-phosphoshikimate + phosphate. It functions in the pathway metabolic intermediate biosynthesis; chorismate biosynthesis; chorismate from D-erythrose 4-phosphate and phosphoenolpyruvate: step 6/7. Catalyzes the transfer of the enolpyruvyl moiety of phosphoenolpyruvate (PEP) to the 5-hydroxyl of shikimate-3-phosphate (S3P) to produce enolpyruvyl shikimate-3-phosphate and inorganic phosphate. The chain is 3-phosphoshikimate 1-carboxyvinyltransferase from Chlorobium luteolum (strain DSM 273 / BCRC 81028 / 2530) (Pelodictyon luteolum).